The following is a 559-amino-acid chain: Formate--tetrahydrofolate ligase (559 aa).

68–75 (TPAGEGKS) contacts ATP.

Belongs to the formate--tetrahydrofolate ligase family.

The catalysed reaction is (6S)-5,6,7,8-tetrahydrofolate + formate + ATP = (6R)-10-formyltetrahydrofolate + ADP + phosphate. The protein operates within one-carbon metabolism; tetrahydrofolate interconversion. The polypeptide is Formate--tetrahydrofolate ligase (Lactobacillus gasseri (strain ATCC 33323 / DSM 20243 / BCRC 14619 / CIP 102991 / JCM 1131 / KCTC 3163 / NCIMB 11718 / NCTC 13722 / AM63)).